The sequence spans 351 residues: MTSPSHASDRGGGDGDSVENQSPELRKDPVTNRWVIFSPARAKRPTDFKSKSPQNPNPKPSSCPFCIGREQECAPELFRVPDHDPNWKLRVIENLYPALSRNLETQSTQPETGTSRTIVGFGFHDVVIESPVHSIQLSDIDPVGIGDILIAYKKRINQIAQHDSINYIQVFKNQGASAGASMSHSHSQMMALPVVPPTVSSRLDGTKDYFEETGKCCLCEAKSKHFVIDESSHFVSVAPFAATYPFEIWIIPKDHSSHFHHLDDVKAVDLGGLLKLMLQKIAKQLNDPPYNYMIHTSPLKVTESQLPYTHWFLQIVPQLSGVGGFEIGTGCYINPVFPEDVAKVMREVSLT.

The interval 1 to 63 (MTSPSHASDR…QNPNPKPSSC (63 aa)) is disordered. 41–44 (RAKR) contributes to the ADP-alpha-D-glucose binding site. Cysteine 63 and cysteine 66 together coordinate Zn(2+). ADP-alpha-D-glucose contacts are provided by residues 72-74 (ECA) and asparagine 94. Zn(2+) is bound at residue histidine 133. Residues asparagine 173 and 179–182 (GASM) contribute to the ADP-alpha-D-glucose site. Histidine 184 is a binding site for Zn(2+). Catalysis depends on histidine 186, which acts as the Tele-AMP-histidine intermediate. Glutamine 188 is an ADP-alpha-D-glucose binding site. Positions 216, 219, 255, and 310 each coordinate Zn(2+). ADP-alpha-D-glucose-binding positions include glycine 321 and 325 to 326 (FE).

Belongs to the galactose-1-phosphate uridylyltransferase type 1 family. In terms of assembly, homodimer. The cofactor is Zn(2+).

It catalyses the reaction alpha-D-glucose 1-phosphate + ADP + H(+) = ADP-alpha-D-glucose + phosphate. Functionally, catalyzes the conversion of ADP-glucose and inorganic phosphate (Pi) into glucose-1-phosphate and ADP. Does not possess galactose-1-phosphate uridylyltransferase activity. The sequence is that of ADP-glucose phosphorylase from Arabidopsis thaliana (Mouse-ear cress).